A 1118-amino-acid polypeptide reads, in one-letter code: Cytospin-A (1118 aa).

4 disordered regions span residues 1 to 63 (MKKA…AGMA), 75 to 176 (KKST…NQIS), 294 to 324 (SLSP…GSVE), and 359 to 391 (SSDD…NASE). Low complexity predominate over residues 80 to 90 (SSAAPSAPAPA). The segment covering 93–117 (ISENKSKISTGTSSSAKRSTSAGNK) has biased composition (polar residues). Residues 120–131 (SSTRERLRERTR) are compositionally biased toward basic and acidic residues. A compositionally biased stretch (polar residues) spans 133–145 (NQSKKLPSVSQGA). Over residues 158-171 (TAAEGDIRMSKSKS) the composition is skewed to basic and acidic residues. Residues 168 to 281 (KSKSDNQISD…LNALGFSLEQ (114 aa)) are a coiled coil. The segment covering 294-304 (SLSPEITPGNQ) has biased composition (polar residues). Residues 359–373 (SSDDALDAPSSSESE) are compositionally biased toward low complexity. Phosphoserine is present on residues S385, S386, and S390. Coiled-coil stretches lie at residues 395-450 (ACLT…MESL) and 488-808 (RYME…RGRV). Phosphoserine is present on residues S869, S882, and S888. Residues 921 to 999 (TSSTSRPASL…STRSRIREER (79 aa)) are disordered. The span at 947 to 957 (RSSEEMKRDIS) shows a compositional bias: basic and acidic residues. Low complexity predominate over residues 972–992 (TTSPQLSLSSSPTASVTPSTR). The 106-residue stretch at 1012-1117 (GSKRNALLKW…YVTAIYKYFE (106 aa)) folds into the Calponin-homology (CH) domain.

The protein belongs to the cytospin-A family. In terms of assembly, may interact with both microtubules and actin cytoskeleton.

It localises to the cytoplasm. The protein localises to the cytoskeleton. The protein resides in the spindle. Its subcellular location is the cell junction. It is found in the gap junction. In terms of biological role, involved in cytokinesis and spindle organization. May play a role in actin cytoskeleton organization and microtubule stabilization and hence required for proper cell adhesion and migration. In Mus musculus (Mouse), this protein is Cytospin-A (Specc1l).